Here is a 340-residue protein sequence, read N- to C-terminus: Cyclic GMP-AMP synthase-like receptor 3 (340 aa).

ATP is bound by residues serine 62 and 74-76 (EAD). 3 residues coordinate Mg(2+): glutamate 74, aspartate 76, and aspartate 177. ATP-binding positions include lysine 241 and 255-259 (SYHLK). Mn(2+) contacts are provided by aspartate 267 and aspartate 270.

Belongs to the mab-21 family. Mg(2+) is required as a cofactor. Requires Mn(2+) as cofactor.

It carries out the reaction 2 ATP = 3',3'-c-di-AMP + 2 diphosphate. Functionally, nucleotidyltransferase that catalyzes the formation of cyclic di-AMP (3',3'-c-di-AMP) from 2 molecules of ATP and plays a key role in innate immunity. Acts as a key sensor of double-stranded RNA (dsRNA), the presence of dsRNA in the cytoplasm being a danger signal that triggers the immune responses. Directly binds dsRNA, activating the nucleotidyltransferase activity, leading to synthesis of 3',3'-c-di-AMP, a second messenger that binds to and activates Sting, thereby triggering the immune response via activation of the NF-kappa-B transcription factor. The sequence is that of Cyclic GMP-AMP synthase-like receptor 3 from Stylophora pistillata (Smooth cauliflower coral).